The sequence spans 882 residues: Formin-like protein 9 (882 aa).

The signal sequence occupies residues 1-19 (MGMAMRCVLVLFSVSPVLL). Residues 67–92 (SRGRRHKRYSEAPAPAPAPVPAHQAR) are disordered. Residues 138-158 (IVALGVVGLCLVVLGVVIAAF) traverse the membrane as a helical segment. 3 disordered regions span residues 178-202 (RHGS…PDPL), 293-316 (THDS…LSPK), and 401-471 (TMTN…PLPR). Positions 298 to 308 (SDSSYQSLSPD) are enriched in low complexity. The span at 427-441 (KPAPPPPPQKNPPPN) shows a compositional bias: pro residues. In terms of domain architecture, FH2 spans 462–882 (VGKDGSPLPR…QTLNLVLPLK (421 aa)).

It belongs to the formin-like family. Class-I subfamily.

It localises to the membrane. This chain is Formin-like protein 9 (FH9), found in Oryza sativa subsp. japonica (Rice).